The sequence spans 150 residues: Ribonuclease HI (150 aa).

Residues 1–142 (MSDSVELFTD…ADQLANRGVD (142 aa)) form the RNase H type-1 domain. 4 residues coordinate Mg(2+): Asp-10, Glu-48, Asp-70, and Asp-134.

Belongs to the RNase H family. Monomer. It depends on Mg(2+) as a cofactor.

Its subcellular location is the cytoplasm. It carries out the reaction Endonucleolytic cleavage to 5'-phosphomonoester.. Functionally, endonuclease that specifically degrades the RNA of RNA-DNA hybrids. The polypeptide is Ribonuclease HI (Pseudomonas syringae pv. tomato (strain ATCC BAA-871 / DC3000)).